The following is an 80-amino-acid chain: Acyl carrier protein (80 aa).

Positions 2-77 (SDTLKRLQKI…DALNYIENKI (76 aa)) constitute a Carrier domain. Ser37 is subject to O-(pantetheine 4'-phosphoryl)serine.

It belongs to the acyl carrier protein (ACP) family. Post-translationally, 4'-phosphopantetheine is transferred from CoA to a specific serine of apo-ACP by AcpS. This modification is essential for activity because fatty acids are bound in thioester linkage to the sulfhydryl of the prosthetic group.

It localises to the plastid. Its subcellular location is the chloroplast. Its pathway is lipid metabolism; fatty acid biosynthesis. Carrier of the growing fatty acid chain in fatty acid biosynthesis. The sequence is that of Acyl carrier protein from Cylindrotheca sp. (strain N1) (Marine diatom).